The chain runs to 249 residues: Cell division protein DivIB (249 aa).

Topologically, residues 1–19 (MKEENEYIVKRRKKRRRKR) are cytoplasmic. A helical membrane pass occupies residues 20-40 (ITIFLFLLICILVTLCLKLPY). A POTRA domain is found at 41–109 (FNIKYINVEG…NTIDIIVKER (69 aa)). The Extracellular segment spans residues 41–249 (FNIKYINVEG…KGNPVYSLQQ (209 aa)).

The protein belongs to the FtsQ/DivIB family. DivIB subfamily.

Its subcellular location is the cell membrane. Its function is as follows. Cell division protein that may be involved in stabilizing or promoting the assembly of the division complex. This chain is Cell division protein DivIB, found in Clostridium acetobutylicum (strain ATCC 824 / DSM 792 / JCM 1419 / IAM 19013 / LMG 5710 / NBRC 13948 / NRRL B-527 / VKM B-1787 / 2291 / W).